Reading from the N-terminus, the 311-residue chain is Probable manganese-dependent inorganic pyrophosphatase (311 aa).

Positions 9, 13, 15, 75, 97, and 149 each coordinate Mn(2+).

The protein belongs to the PPase class C family. Mn(2+) is required as a cofactor.

It localises to the cytoplasm. The catalysed reaction is diphosphate + H2O = 2 phosphate + H(+). In Shouchella clausii (strain KSM-K16) (Alkalihalobacillus clausii), this protein is Probable manganese-dependent inorganic pyrophosphatase.